Here is a 578-residue protein sequence, read N- to C-terminus: Isocitrate dehydrogenase kinase/phosphatase (578 aa).

Residues 315–321 (APGIRGM) and Lys336 contribute to the ATP site. The active site involves Asp371.

It belongs to the AceK family.

The protein localises to the cytoplasm. The catalysed reaction is L-seryl-[isocitrate dehydrogenase] + ATP = O-phospho-L-seryl-[isocitrate dehydrogenase] + ADP + H(+). Its function is as follows. Bifunctional enzyme which can phosphorylate or dephosphorylate isocitrate dehydrogenase (IDH) on a specific serine residue. This is a regulatory mechanism which enables bacteria to bypass the Krebs cycle via the glyoxylate shunt in response to the source of carbon. When bacteria are grown on glucose, IDH is fully active and unphosphorylated, but when grown on acetate or ethanol, the activity of IDH declines drastically concomitant with its phosphorylation. The sequence is that of Isocitrate dehydrogenase kinase/phosphatase from Escherichia coli O17:K52:H18 (strain UMN026 / ExPEC).